The following is a 208-amino-acid chain: Holliday junction resolvase RecU (208 aa).

Residues 1 to 25 (MNYPNGKPFNRNKTKVGRTNDHKSS) are disordered. Mg(2+) contacts are provided by Thr-87, Asp-89, Glu-102, and Gln-121.

It belongs to the RecU family. Mg(2+) is required as a cofactor.

The protein localises to the cytoplasm. It carries out the reaction Endonucleolytic cleavage at a junction such as a reciprocal single-stranded crossover between two homologous DNA duplexes (Holliday junction).. In terms of biological role, endonuclease that resolves Holliday junction intermediates in genetic recombination. Cleaves mobile four-strand junctions by introducing symmetrical nicks in paired strands. Promotes annealing of linear ssDNA with homologous dsDNA. Required for DNA repair, homologous recombination and chromosome segregation. This is Holliday junction resolvase RecU from Staphylococcus carnosus (strain TM300).